A 335-amino-acid chain; its full sequence is MKLAVIPGDGIGPEVIAEALKVLDVVVPGVEKTEYDLGAKRYHATGEILPDSVLPELREHDAILLGAIGDPSVPSGVLERGLLLRTRFELDHHVNLRPSRLFTGVRSPLAGAPDIDFVVVREGTEGPYTGTGGAIRVRTPHEVATEVSTNTRFGIERVVRYAFAKAQARRKHLTLVHKTNVLTFAGSLWQRTVDEVGAEFPEVTVAYQHIDAATIHMVTDPGRFDVIVTDNLFGDIITDLAAAVSGGIGLAASGNIDASGTNPSMFEPVHGSAPDIAGQSKADPTAAILSVSLLLNHLGDTEAAARIDAAVAKDLAARSGTASTVEIGDRIAAAV.

Substrate-binding residues include arginine 87, arginine 97, arginine 121, and aspartate 211. Residues aspartate 211, aspartate 235, and aspartate 239 each coordinate Mg(2+). Glycine 271–aspartate 283 is an NAD(+) binding site.

The protein belongs to the isocitrate and isopropylmalate dehydrogenases family. LeuB type 2 subfamily. Homodimer. Mg(2+) is required as a cofactor. It depends on Mn(2+) as a cofactor.

The protein localises to the cytoplasm. The catalysed reaction is (2R,3S)-3-isopropylmalate + NAD(+) = 4-methyl-2-oxopentanoate + CO2 + NADH. Its pathway is amino-acid biosynthesis; L-leucine biosynthesis; L-leucine from 3-methyl-2-oxobutanoate: step 3/4. Functionally, catalyzes the oxidation of 3-carboxy-2-hydroxy-4-methylpentanoate (3-isopropylmalate) to 3-carboxy-4-methyl-2-oxopentanoate. The product decarboxylates to 4-methyl-2 oxopentanoate. The polypeptide is 3-isopropylmalate dehydrogenase (Nocardia farcinica (strain IFM 10152)).